The chain runs to 396 residues: Putative 2-hydroxyacid dehydrogenase YPL113C (396 aa).

Residues 227-228, 311-313, and Asp337 contribute to the NAD(+) site; these read SI and VGR. Arg313 is an active-site residue. Glu342 is a catalytic residue. The Proton donor role is filled by His361. 361–364 provides a ligand contact to NAD(+); sequence HIGS.

It belongs to the D-isomer specific 2-hydroxyacid dehydrogenase family.

Putative 2-hydroxyacid dehydrogenase. This is Putative 2-hydroxyacid dehydrogenase YPL113C from Saccharomyces cerevisiae (strain ATCC 204508 / S288c) (Baker's yeast).